The primary structure comprises 413 residues: Peptidase T (413 aa).

Zn(2+) is bound at residue His84. Asp86 is a catalytic residue. Position 147 (Asp147) interacts with Zn(2+). Glu181 acts as the Proton acceptor in catalysis. Glu182, Asp204, and His386 together coordinate Zn(2+).

Belongs to the peptidase M20B family. Zn(2+) is required as a cofactor.

The protein localises to the cytoplasm. It carries out the reaction Release of the N-terminal residue from a tripeptide.. In terms of biological role, cleaves the N-terminal amino acid of tripeptides. In Ligilactobacillus salivarius (strain UCC118) (Lactobacillus salivarius), this protein is Peptidase T.